The chain runs to 109 residues: Small ribosomal subunit protein bS6c (109 aa).

The protein belongs to the bacterial ribosomal protein bS6 family.

It is found in the plastid. The protein localises to the chloroplast. Functionally, binds together with bS18 to 16S ribosomal RNA. This Pyropia yezoensis (Susabi-nori) protein is Small ribosomal subunit protein bS6c.